The following is an 876-amino-acid chain: Alanine--tRNA ligase (876 aa).

Residues H564, H568, C666, and H670 each coordinate Zn(2+).

It belongs to the class-II aminoacyl-tRNA synthetase family. Homotetramer. Requires Zn(2+) as cofactor.

The protein localises to the cytoplasm. It carries out the reaction tRNA(Ala) + L-alanine + ATP = L-alanyl-tRNA(Ala) + AMP + diphosphate. Its function is as follows. Catalyzes the attachment of alanine to tRNA(Ala) in a two-step reaction: alanine is first activated by ATP to form Ala-AMP and then transferred to the acceptor end of tRNA(Ala). Also edits incorrectly charged Ser-tRNA(Ala) and Gly-tRNA(Ala) via its editing domain. This chain is Alanine--tRNA ligase, found in Salmonella typhi.